The primary structure comprises 364 residues: tRNA 2-selenouridine synthase (364 aa).

The Rhodanese domain occupies 14–137 (LIADTPIIDV…LRQTAIQATI (124 aa)). C97 functions as the S-selanylcysteine intermediate in the catalytic mechanism.

Belongs to the SelU family. As to quaternary structure, monomer.

It carries out the reaction 5-methylaminomethyl-2-thiouridine(34) in tRNA + selenophosphate + (2E)-geranyl diphosphate + H2O + H(+) = 5-methylaminomethyl-2-selenouridine(34) in tRNA + (2E)-thiogeraniol + phosphate + diphosphate. It catalyses the reaction 5-methylaminomethyl-2-thiouridine(34) in tRNA + (2E)-geranyl diphosphate = 5-methylaminomethyl-S-(2E)-geranyl-thiouridine(34) in tRNA + diphosphate. The enzyme catalyses 5-methylaminomethyl-S-(2E)-geranyl-thiouridine(34) in tRNA + selenophosphate + H(+) = 5-methylaminomethyl-2-(Se-phospho)selenouridine(34) in tRNA + (2E)-thiogeraniol. The catalysed reaction is 5-methylaminomethyl-2-(Se-phospho)selenouridine(34) in tRNA + H2O = 5-methylaminomethyl-2-selenouridine(34) in tRNA + phosphate. Involved in the post-transcriptional modification of the uridine at the wobble position (U34) of tRNA(Lys), tRNA(Glu) and tRNA(Gln). Catalyzes the conversion of 2-thiouridine (S2U-RNA) to 2-selenouridine (Se2U-RNA). Acts in a two-step process involving geranylation of 2-thiouridine (S2U) to S-geranyl-2-thiouridine (geS2U) and subsequent selenation of the latter derivative to 2-selenouridine (Se2U) in the tRNA chain. The protein is tRNA 2-selenouridine synthase of Escherichia coli O81 (strain ED1a).